Here is a 268-residue protein sequence, read N- to C-terminus: Membrane lipoprotein TpN32 (268 aa).

Positions 1 to 23 (MKGKTVSAALVGKLIALSVGVVA) are cleaved as a signal peptide. A lipid anchor (N-palmitoyl cysteine) is attached at cysteine 24. Cysteine 24 carries S-diacylglycerol cysteine lipidation.

Belongs to the NlpA lipoprotein family.

The protein localises to the cell membrane. The polypeptide is Membrane lipoprotein TpN32 (tpn32) (Treponema pallidum (strain Nichols)).